The following is a 347-amino-acid chain: Selenide, water dikinase (347 aa).

Cysteine 17 is a catalytic residue. ATP-binding positions include lysine 20 and 48–50 (TRD). Mg(2+) is bound at residue aspartate 51. Residues aspartate 68, aspartate 91, and 139–141 (GHS) each bind ATP. Aspartate 91 lines the Mg(2+) pocket. Aspartate 227 serves as a coordination point for Mg(2+).

It belongs to the selenophosphate synthase 1 family. Class I subfamily. As to quaternary structure, homodimer. Requires Mg(2+) as cofactor.

It carries out the reaction hydrogenselenide + ATP + H2O = selenophosphate + AMP + phosphate + 2 H(+). Synthesizes selenophosphate from selenide and ATP. The protein is Selenide, water dikinase of Shigella flexneri serotype 5b (strain 8401).